The primary structure comprises 332 residues: Ferredoxin--NADP reductase (332 aa).

D33, Q41, Y46, A86, F120, D286, and T327 together coordinate FAD.

It belongs to the ferredoxin--NADP reductase type 2 family. As to quaternary structure, homodimer. It depends on FAD as a cofactor.

It carries out the reaction 2 reduced [2Fe-2S]-[ferredoxin] + NADP(+) + H(+) = 2 oxidized [2Fe-2S]-[ferredoxin] + NADPH. In Rickettsia bellii (strain OSU 85-389), this protein is Ferredoxin--NADP reductase.